Consider the following 273-residue polypeptide: 4-hydroxy-tetrahydrodipicolinate reductase (273 aa).

NAD(+) contacts are provided by residues 12–17 (GAGGRM) and Glu-38. Arg-39 provides a ligand contact to NADP(+). Residues 102 to 104 (GTT) and 126 to 129 (AANF) contribute to the NAD(+) site. His-159 serves as the catalytic Proton donor/acceptor. Position 160 (His-160) interacts with (S)-2,3,4,5-tetrahydrodipicolinate. The Proton donor role is filled by Lys-163. (S)-2,3,4,5-tetrahydrodipicolinate is bound at residue 169-170 (GT).

Belongs to the DapB family. Homotetramer.

The protein resides in the cytoplasm. The catalysed reaction is (S)-2,3,4,5-tetrahydrodipicolinate + NAD(+) + H2O = (2S,4S)-4-hydroxy-2,3,4,5-tetrahydrodipicolinate + NADH + H(+). It carries out the reaction (S)-2,3,4,5-tetrahydrodipicolinate + NADP(+) + H2O = (2S,4S)-4-hydroxy-2,3,4,5-tetrahydrodipicolinate + NADPH + H(+). The protein operates within amino-acid biosynthesis; L-lysine biosynthesis via DAP pathway; (S)-tetrahydrodipicolinate from L-aspartate: step 4/4. Its function is as follows. Catalyzes the conversion of 4-hydroxy-tetrahydrodipicolinate (HTPA) to tetrahydrodipicolinate. The chain is 4-hydroxy-tetrahydrodipicolinate reductase from Shigella flexneri.